An 86-amino-acid chain; its full sequence is Large ribosomal subunit protein bL31B (86 aa).

The protein belongs to the bacterial ribosomal protein bL31 family. Type B subfamily. As to quaternary structure, part of the 50S ribosomal subunit.

This is Large ribosomal subunit protein bL31B from Cupriavidus metallidurans (strain ATCC 43123 / DSM 2839 / NBRC 102507 / CH34) (Ralstonia metallidurans).